The chain runs to 400 residues: Formate-dependent phosphoribosylglycinamide formyltransferase (400 aa).

Residues 22–23 (EL) and glutamate 82 each bind N(1)-(5-phospho-beta-D-ribosyl)glycinamide. ATP is bound by residues arginine 115, lysine 157, 162 to 167 (SSGKGQ), 197 to 200 (EGFI), and glutamate 205. In terms of domain architecture, ATP-grasp spans 120–315 (RLAAETLGLP…EFELHARAIL (196 aa)). The Mg(2+) site is built by glutamate 274 and glutamate 286. N(1)-(5-phospho-beta-D-ribosyl)glycinamide is bound by residues aspartate 293, lysine 362, and 369–370 (RR).

It belongs to the PurK/PurT family. Homodimer.

It carries out the reaction N(1)-(5-phospho-beta-D-ribosyl)glycinamide + formate + ATP = N(2)-formyl-N(1)-(5-phospho-beta-D-ribosyl)glycinamide + ADP + phosphate + H(+). Its pathway is purine metabolism; IMP biosynthesis via de novo pathway; N(2)-formyl-N(1)-(5-phospho-D-ribosyl)glycinamide from N(1)-(5-phospho-D-ribosyl)glycinamide (formate route): step 1/1. Its function is as follows. Involved in the de novo purine biosynthesis. Catalyzes the transfer of formate to 5-phospho-ribosyl-glycinamide (GAR), producing 5-phospho-ribosyl-N-formylglycinamide (FGAR). Formate is provided by PurU via hydrolysis of 10-formyl-tetrahydrofolate. This Cupriavidus metallidurans (strain ATCC 43123 / DSM 2839 / NBRC 102507 / CH34) (Ralstonia metallidurans) protein is Formate-dependent phosphoribosylglycinamide formyltransferase.